The following is a 628-amino-acid chain: Rac GTPase-activating protein 1 (628 aa).

Position 1 is an N-acetylmethionine (Met-1). A coiled-coil region spans residues 33–110 (QVVKDFEDFR…IQLIRDILMC (78 aa)). The interaction with SLC26A8 stretch occupies residues 107-286 (ILMCDTSGSI…GTPQNTGGMR (180 aa)). Ser-150 carries the post-translational modification Phosphoserine; by PLK1. Residue Ser-155 is modified to Phosphoserine. Ser-158 is subject to Phosphoserine; by PLK1. Position 162 is a phosphothreonine (Thr-162). A phosphoserine; by PLK1 mark is found at Ser-165 and Ser-171. The segment at 179–201 (KKREKRRSNSRQFIDGPPGPVKK) is disordered. Phosphoserine is present on residues Ser-204, Ser-207, and Ser-215. The tract at residues 242–284 (SWTRSRGKSGPLQPVNSDSALNSRPLEPRTDTDNLGTPQNTGG) is disordered. Lys-249 participates in a covalent cross-link: Glycyl lysine isopeptide (Lys-Gly) (interchain with G-Cter in SUMO2). Position 258 is a phosphoserine (Ser-258). Residues 274 to 283 (DNLGTPQNTG) show a composition bias toward polar residues. The Phorbol-ester/DAG-type zinc-finger motif lies at 287 to 336 (LHDFVSKTVIKPESCVPCGKRIKFGKLSLKCRDCRLVSHPECRDRCPLPC). A Phosphothreonine modification is found at Thr-343. The Rho-GAP domain occupies 350–540 (GMLADFVSQA…RLLSLPLEYW (191 aa)). Residue Ser-388 is modified to Phosphoserine; by AURKB. Lys-405 participates in a covalent cross-link: Glycyl lysine isopeptide (Lys-Gly) (interchain with G-Cter in SUMO2). A Phosphoserine; by AURKB modification is found at Ser-411. Thr-564, Thr-577, Thr-585, and Thr-602 each carry phosphothreonine.

As to quaternary structure, heterotetramer of two molecules each of RACGAP1 and KIF23. Found in the centralspindlin complex. Associates with alpha-, beta- and gamma-tubulin and microtubules. Interacts via its Rho-GAP domain with RND2. Associates with AURKB during M phase. Interacts via its Rho-GAP domain and basic region with PRC1. The interaction with PRC1 inhibits its GAP activity towards CDC42 in vitro, which may be required for maintaining normal spindle morphology. Interacts with SLC26A8 via its N-terminus. Interacts with ECT2; the interaction is direct, occurs at anaphase and during cytokinesis in a microtubule-dependent manner, is enhanced by phosphorylation by PLK1 and phosphorylation at Ser-165 plays a major role in mediating binding. Interacts with RAB11FIP3; the interaction occurs at late telophase. Interacts with KIF23; the interaction is direct. Post-translationally, phosphorylated at multiple sites in the midbody during cytokinesis. Phosphorylation by AURKB on Ser-388 at the midbody is, at least in part, responsible for exerting its latent GAP activity towards RhoA. Phosphorylation on multiple serine residues by PLK1 enhances its association with ECT2 and is critical for cleavage furrow formation. Phosphorylation on Ser-165 plays a major role in mediating interaction with ECT2. Phosphorylation on Ser-158 does not appear to contribute to binding to ECT2. As to expression, highly expressed in testis, thymus and spleen and weakly expressed in brain, heart, skeletal muscle and kidney. In testis, expression is restricted to germ cells with the highest levels of expression found in spermatocytes. Not detected in adult liver. Also expressed in fetal liver and in several hematopoietic cell lines.

The protein resides in the nucleus. The protein localises to the cytoplasm. Its subcellular location is the cytoskeleton. It is found in the spindle. It localises to the cytoplasmic vesicle. The protein resides in the secretory vesicle. The protein localises to the acrosome. Its subcellular location is the cleavage furrow. It is found in the midbody. It localises to the midbody ring. The protein resides in the cell membrane. In terms of biological role, component of the centralspindlin complex that serves as a microtubule-dependent and Rho-mediated signaling required for the myosin contractile ring formation during the cell cycle cytokinesis. Required for proper attachment of the midbody to the cell membrane during cytokinesis. Sequentially binds to ECT2 and RAB11FIP3 which regulates cleavage furrow ingression and abscission during cytokinesis. Plays key roles in controlling cell growth and differentiation of hematopoietic cells through mechanisms other than regulating Rac GTPase activity. Has a critical role in erythropoiesis. Also involved in the regulation of growth-related processes in adipocytes and myoblasts. May be involved in regulating spermatogenesis and in the RACGAP1 pathway in neuronal proliferation. Shows strong GAP (GTPase activation) activity towards CDC42 and RAC1 and less towards RHOA. Essential for the early stages of embryogenesis. May play a role in regulating cortical activity through RHOA during cytokinesis. May participate in the regulation of sulfate transport in male germ cells. The protein is Rac GTPase-activating protein 1 of Mus musculus (Mouse).